The following is a 398-amino-acid chain: Carbamoyl phosphate synthase small chain (398 aa).

The CPSase stretch occupies residues 1 to 207 (MIQTISSSRP…KGYGTNNVHN (207 aa)). The L-glutamine site is built by serine 60, glycine 257, and glycine 259. The region spanning 209-397 (HIVAIDYGIK…CDLIMNHKKI (189 aa)) is the Glutamine amidotransferase type-1 domain. The Nucleophile role is filled by cysteine 286. Residues leucine 287, glutamine 290, asparagine 328, glycine 330, and phenylalanine 331 each contribute to the L-glutamine site. Residues histidine 370 and glutamate 372 contribute to the active site.

The protein belongs to the CarA family. Composed of two chains; the small (or glutamine) chain promotes the hydrolysis of glutamine to ammonia, which is used by the large (or ammonia) chain to synthesize carbamoyl phosphate. Tetramer of heterodimers (alpha,beta)4.

It catalyses the reaction hydrogencarbonate + L-glutamine + 2 ATP + H2O = carbamoyl phosphate + L-glutamate + 2 ADP + phosphate + 2 H(+). It carries out the reaction L-glutamine + H2O = L-glutamate + NH4(+). It functions in the pathway amino-acid biosynthesis; L-arginine biosynthesis; carbamoyl phosphate from bicarbonate: step 1/1. Its pathway is pyrimidine metabolism; UMP biosynthesis via de novo pathway; (S)-dihydroorotate from bicarbonate: step 1/3. Its function is as follows. Small subunit of the glutamine-dependent carbamoyl phosphate synthetase (CPSase). CPSase catalyzes the formation of carbamoyl phosphate from the ammonia moiety of glutamine, carbonate, and phosphate donated by ATP, constituting the first step of 2 biosynthetic pathways, one leading to arginine and/or urea and the other to pyrimidine nucleotides. The small subunit (glutamine amidotransferase) binds and cleaves glutamine to supply the large subunit with the substrate ammonia. The polypeptide is Carbamoyl phosphate synthase small chain (Bartonella tribocorum (strain CIP 105476 / IBS 506)).